The following is a 326-amino-acid chain: L-carnitine dehydrogenase (326 aa).

An NAD(+)-binding site is contributed by 19-24 (GTGVIG).

It belongs to the 3-hydroxyacyl-CoA dehydrogenase family. L-carnitine dehydrogenase subfamily. In terms of assembly, homodimer.

It is found in the cytoplasm. It catalyses the reaction carnitine + NAD(+) = 3-dehydrocarnitine + NADH + H(+). It participates in amine and polyamine metabolism; carnitine metabolism. In terms of biological role, catalyzes the NAD(+)-dependent oxidation of L-carnitine to 3-dehydrocarnitine. The polypeptide is L-carnitine dehydrogenase (Bacillus cereus (strain ZK / E33L)).